A 364-amino-acid polypeptide reads, in one-letter code: Chorismate synthase (364 aa).

Arg48 contributes to the NADP(+) binding site. Residues Arg131 to Ser133, Asn243 to Ala244, Gly288, Lys303 to Ser307, and Arg329 each bind FMN.

This sequence belongs to the chorismate synthase family. In terms of assembly, homotetramer. The cofactor is FMNH2.

The catalysed reaction is 5-O-(1-carboxyvinyl)-3-phosphoshikimate = chorismate + phosphate. It participates in metabolic intermediate biosynthesis; chorismate biosynthesis; chorismate from D-erythrose 4-phosphate and phosphoenolpyruvate: step 7/7. Catalyzes the anti-1,4-elimination of the C-3 phosphate and the C-6 proR hydrogen from 5-enolpyruvylshikimate-3-phosphate (EPSP) to yield chorismate, which is the branch point compound that serves as the starting substrate for the three terminal pathways of aromatic amino acid biosynthesis. This reaction introduces a second double bond into the aromatic ring system. The sequence is that of Chorismate synthase from Bartonella bacilliformis (strain ATCC 35685 / KC583 / Herrer 020/F12,63).